The sequence spans 316 residues: Porphobilinogen deaminase (316 aa).

C240 carries the S-(dipyrrolylmethanemethyl)cysteine modification.

Belongs to the HMBS family. As to quaternary structure, monomer. Requires dipyrromethane as cofactor.

It catalyses the reaction 4 porphobilinogen + H2O = hydroxymethylbilane + 4 NH4(+). It participates in porphyrin-containing compound metabolism; protoporphyrin-IX biosynthesis; coproporphyrinogen-III from 5-aminolevulinate: step 2/4. In terms of biological role, tetrapolymerization of the monopyrrole PBG into the hydroxymethylbilane pre-uroporphyrinogen in several discrete steps. The sequence is that of Porphobilinogen deaminase from Alkaliphilus metalliredigens (strain QYMF).